A 332-amino-acid chain; its full sequence is Autoinducer 2 import system permease protein LsrD (332 aa).

Helical transmembrane passes span 5–25, 43–63, 83–103, 116–136, 160–180, 210–230, and 259–279; these read LNWE…FGAL, ICIG…GIDI, GWPL…CGLF, LVIT…LSGM, LGGL…FWLL, IPYV…LVMV, and IYGG…VGYL.

The protein belongs to the binding-protein-dependent transport system permease family. AraH/RbsC subfamily. The complex is composed of two ATP-binding proteins (LsrA), two transmembrane proteins (LsrC and LsrD) and a solute-binding protein (LsrB).

Its subcellular location is the cell inner membrane. Its function is as follows. Part of the ABC transporter complex LsrABCD involved in autoinducer 2 (AI-2) import. Probably responsible for the translocation of the substrate across the membrane. In Klebsiella pneumoniae subsp. pneumoniae (strain ATCC 700721 / MGH 78578), this protein is Autoinducer 2 import system permease protein LsrD (lsrD).